Reading from the N-terminus, the 195-residue chain is FMN-dependent NADH:quinone oxidoreductase 2 (195 aa).

FMN-binding positions include 16 to 18 and 85 to 88; these read SVS and MWNL.

This sequence belongs to the azoreductase type 1 family. As to quaternary structure, homodimer. It depends on FMN as a cofactor.

It carries out the reaction 2 a quinone + NADH + H(+) = 2 a 1,4-benzosemiquinone + NAD(+). The catalysed reaction is N,N-dimethyl-1,4-phenylenediamine + anthranilate + 2 NAD(+) = 2-(4-dimethylaminophenyl)diazenylbenzoate + 2 NADH + 2 H(+). Its function is as follows. Quinone reductase that provides resistance to thiol-specific stress caused by electrophilic quinones. Functionally, also exhibits azoreductase activity. Catalyzes the reductive cleavage of the azo bond in aromatic azo compounds to the corresponding amines. This Photobacterium profundum (strain SS9) protein is FMN-dependent NADH:quinone oxidoreductase 2.